Here is a 339-residue protein sequence, read N- to C-terminus: MKFVSVEQAIKDLQAGKMLVMVDAEDRENEGDLIFPAQFSTQEKVNFMIKEARGVVCVALDETLAKKFELPLMVPKNTSNHETAFTITVDAKDATTGVSAYERNMTIQIFADDNAKASDFVRPGHINPLIAKKGGVLERTGHTEGTVDLCKLAGLKGACVICEIVKDNGDMARREDLEIFCQKHDLNMIAVSDLIEYRLKHESLIKLEEKSQSVLAGFKAEKFIFSDHNQTQHIAFCFKDIKKCENVKFHISGSDFELLTSDKFSKLLEQIKFLSENGGVIVFMQGEKSSTTQYKNYGIGAQILRYFGIEEIKLLSQSCDKDYIGLEGFGLNLKACNFN.

The segment at 1–206 (MKFVSVEQAI…YRLKHESLIK (206 aa)) is DHBP synthase. D-ribulose 5-phosphate contacts are provided by residues 27 to 28 (RE), Asp32, 139 to 143 (RTGHT), and Glu163. A Mg(2+)-binding site is contributed by Glu28. His142 lines the Mg(2+) pocket. Residues 207-339 (LEEKSQSVLA…GLNLKACNFN (133 aa)) are GTP cyclohydrolase II-like.

The protein in the N-terminal section; belongs to the DHBP synthase family. In the C-terminal section; belongs to the GTP cyclohydrolase II family. Requires Mg(2+) as cofactor. Mn(2+) is required as a cofactor.

The catalysed reaction is D-ribulose 5-phosphate = (2S)-2-hydroxy-3-oxobutyl phosphate + formate + H(+). It functions in the pathway cofactor biosynthesis; riboflavin biosynthesis; 2-hydroxy-3-oxobutyl phosphate from D-ribulose 5-phosphate: step 1/1. Functionally, catalyzes the conversion of D-ribulose 5-phosphate to formate and 3,4-dihydroxy-2-butanone 4-phosphate. The polypeptide is 3,4-dihydroxy-2-butanone 4-phosphate synthase (ribB) (Campylobacter jejuni subsp. jejuni serotype O:2 (strain ATCC 700819 / NCTC 11168)).